The sequence spans 102 residues: ATP-dependent Clp protease adapter protein ClpS (102 aa).

This sequence belongs to the ClpS family. Binds to the N-terminal domain of the chaperone ClpA.

Functionally, involved in the modulation of the specificity of the ClpAP-mediated ATP-dependent protein degradation. The protein is ATP-dependent Clp protease adapter protein ClpS of Shewanella frigidimarina (strain NCIMB 400).